The primary structure comprises 370 residues: Dual-specificity RNA methyltransferase RlmN (370 aa).

The active-site Proton acceptor is Glu97. Residues 103 to 340 (EKSRGTLCIS…CTVRRTRGDD (238 aa)) enclose the Radical SAM core domain. An intrachain disulfide couples Cys110 to Cys345. [4Fe-4S] cluster is bound by residues Cys117, Cys121, and Cys124. S-adenosyl-L-methionine is bound by residues 170–171 (GE), Ser202, 224–226 (SLH), and Asn302. Catalysis depends on Cys345, which acts as the S-methylcysteine intermediate.

The protein belongs to the radical SAM superfamily. RlmN family. [4Fe-4S] cluster serves as cofactor.

The protein resides in the cytoplasm. It carries out the reaction adenosine(2503) in 23S rRNA + 2 reduced [2Fe-2S]-[ferredoxin] + 2 S-adenosyl-L-methionine = 2-methyladenosine(2503) in 23S rRNA + 5'-deoxyadenosine + L-methionine + 2 oxidized [2Fe-2S]-[ferredoxin] + S-adenosyl-L-homocysteine. The enzyme catalyses adenosine(37) in tRNA + 2 reduced [2Fe-2S]-[ferredoxin] + 2 S-adenosyl-L-methionine = 2-methyladenosine(37) in tRNA + 5'-deoxyadenosine + L-methionine + 2 oxidized [2Fe-2S]-[ferredoxin] + S-adenosyl-L-homocysteine. In terms of biological role, specifically methylates position 2 of adenine 2503 in 23S rRNA and position 2 of adenine 37 in tRNAs. m2A2503 modification seems to play a crucial role in the proofreading step occurring at the peptidyl transferase center and thus would serve to optimize ribosomal fidelity. The sequence is that of Dual-specificity RNA methyltransferase RlmN from Hydrogenovibrio crunogenus (strain DSM 25203 / XCL-2) (Thiomicrospira crunogena).